We begin with the raw amino-acid sequence, 735 residues long: Disintegrin and metalloproteinase domain-containing protein 2 (735 aa).

Positions 1-16 (MWRVLFLLSGLGGLRM) are cleaved as a signal peptide. A propeptide spanning residues 17–174 (DSNFDSLPVQ…FKLQSVEPQQ (158 aa)) is cleaved from the precursor. Residues asparagine 122 and asparagine 220 are each glycosylated (N-linked (GlcNAc...) asparagine). The Extracellular segment spans residues 175 to 686 (DFAKYIEMHV…ENIYHSKPMR (512 aa)). The Peptidase M12B domain occupies 178-375 (KYIEMHVIVE…QKSQCLHNQP (198 aa)). 4 disulfide bridges follow: cysteine 287–cysteine 370, cysteine 329–cysteine 354, cysteine 331–cysteine 336, and cysteine 445–cysteine 465. N-linked (GlcNAc...) asparagine glycans are attached at residues asparagine 353, asparagine 459, and asparagine 566. Residues 384–473 (QAVCGNAKLE…SCPENHYVQT (90 aa)) form the Disintegrin domain. In terms of domain architecture, EGF-like spans 612 to 645 (LGYDCTTDKCNDRGVCNNKKHCHCSASYLPPDCS). Disulfide bonds link cysteine 616–cysteine 627, cysteine 621–cysteine 633, and cysteine 635–cysteine 644. Residues 687-707 (WPFFLFIPFFIIFCVLIAIMV) form a helical membrane-spanning segment. Topologically, residues 708 to 735 (KVNFQRKKWRTEDYSSDEQPESESEPKG) are cytoplasmic. Serine 729 carries the phosphoserine modification.

Post-translationally, the prodomain and the metalloprotease domain are cleaved during the epididymal maturation of the spermatozoa. Expressed specifically in spermatogenic cells in the seminiferous cells. Not detected in fetal tissues.

The protein localises to the membrane. Functionally, sperm surface membrane protein that may be involved in sperm-egg plasma membrane adhesion and fusion during fertilization. Could have a direct role in sperm-zona binding or migration of sperm from the uterus into the oviduct. Interactions with egg membrane could be mediated via binding between its disintegrin-like domain to one or more integrins receptors on the egg. This is a non catalytic metalloprotease-like protein. This chain is Disintegrin and metalloproteinase domain-containing protein 2 (ADAM2), found in Homo sapiens (Human).